Consider the following 260-residue polypeptide: Winged helix repair factor 1 (260 aa).

Winged helix domain regions lie at residues 38–110 (FTED…MVVM), 126–185 (SRAT…LAVP), and 186–260 (GAGR…ISET).

The protein belongs to the STK19 family. Monomer in solution. Homodimer; when bound to DNA. Component of a transcription-coupled nucleotide excision repair (TC-NER) complex which assembles and interacts with the multiprotein RNA polymerase II complex when it stalls at DNA lesions.

It localises to the nucleus. Its function is as follows. DNA-binding protein which is required for efficient transcription-coupled nucleotide excision repair (TC-NER). Acts as part of a TC-NER complex which assembles and interacts with RNA polymerase II (RNAPII) when it stalls at DNA lesions. This Xenopus laevis (African clawed frog) protein is Winged helix repair factor 1.